The following is a 275-amino-acid chain: Phosphonoacetaldehyde hydrolase (275 aa).

Asp-15 (nucleophile) is an active-site residue. Asp-15 and Ala-17 together coordinate Mg(2+). Lys-56 functions as the Schiff-base intermediate with substrate in the catalytic mechanism. Position 189 (Asp-189) interacts with Mg(2+).

This sequence belongs to the HAD-like hydrolase superfamily. PhnX family. Homodimer. It depends on Mg(2+) as a cofactor.

It catalyses the reaction phosphonoacetaldehyde + H2O = acetaldehyde + phosphate + H(+). Its function is as follows. Involved in phosphonate degradation. This Pseudomonas paraeruginosa (strain DSM 24068 / PA7) (Pseudomonas aeruginosa (strain PA7)) protein is Phosphonoacetaldehyde hydrolase.